Consider the following 208-residue polypeptide: Small ribosomal subunit protein uS5 (208 aa).

Residues 48-111 (LEDEVLDINM…DAAKLDITYI (64 aa)) enclose the S5 DRBM domain.

This sequence belongs to the universal ribosomal protein uS5 family. In terms of assembly, part of the 30S ribosomal subunit. Contacts protein S4.

Functionally, with S4 and S12 plays an important role in translational accuracy. This Methanosarcina barkeri (strain Fusaro / DSM 804) protein is Small ribosomal subunit protein uS5.